Here is a 242-residue protein sequence, read N- to C-terminus: ATP synthase subunit a, organellar chromatophore (242 aa).

5 helical membrane-spanning segments follow: residues 28-48 (LHGQ…VLVI), 89-109 (LPFI…GALV), 128-148 (INTT…AGLS), 193-213 (LVVG…AMFL), and 214-234 (GLFT…NYIG).

The protein belongs to the ATPase A chain family. In terms of assembly, F-type ATPases have 2 components, CF(1) - the catalytic core - and CF(0) - the membrane proton channel. CF(1) has five subunits: alpha(3), beta(3), gamma(1), delta(1), epsilon(1). CF(0) has four main subunits: a, b, b' and c.

The protein localises to the plastid. Its subcellular location is the organellar chromatophore thylakoid membrane. In terms of biological role, key component of the proton channel; it plays a direct role in the translocation of protons across the membrane. The polypeptide is ATP synthase subunit a, organellar chromatophore (Paulinella chromatophora).